Reading from the N-terminus, the 887-residue chain is Pyruvate dehydrogenase E1 component (887 aa).

As to quaternary structure, homodimer. Part of the PDH complex, consisting of multiple copies of pyruvate dehydrogenase (E1), dihydrolipoamide acetyltransferase (E2) and lipoamide dehydrogenase (E3). It depends on thiamine diphosphate as a cofactor.

It carries out the reaction N(6)-[(R)-lipoyl]-L-lysyl-[protein] + pyruvate + H(+) = N(6)-[(R)-S(8)-acetyldihydrolipoyl]-L-lysyl-[protein] + CO2. In terms of biological role, component of the pyruvate dehydrogenase (PDH) complex, that catalyzes the overall conversion of pyruvate to acetyl-CoA and CO(2). The chain is Pyruvate dehydrogenase E1 component (aceE) from Buchnera aphidicola subsp. Baizongia pistaciae (strain Bp).